Reading from the N-terminus, the 240-residue chain is Ribosomal RNA small subunit methyltransferase G (240 aa).

Residues Gly80, Phe85, 103–105, 131–132, and Arg150 contribute to the S-adenosyl-L-methionine site; these read DSS and AE.

It belongs to the methyltransferase superfamily. RNA methyltransferase RsmG family.

The protein localises to the cytoplasm. Its function is as follows. Specifically methylates the N7 position of a guanine in 16S rRNA. This Thermoanaerobacter sp. (strain X514) protein is Ribosomal RNA small subunit methyltransferase G.